The primary structure comprises 238 residues: Ribosomal RNA small subunit methyltransferase G (238 aa).

Residues Gly-99, Leu-104, 122 to 124 (DAT), 150 to 151 (VE), and Arg-164 each bind S-adenosyl-L-methionine.

Belongs to the methyltransferase superfamily. RNA methyltransferase RsmG family.

It is found in the cytoplasm. Its function is as follows. Specifically methylates the N7 position of a guanine in 16S rRNA. The protein is Ribosomal RNA small subunit methyltransferase G of Chlorobium luteolum (strain DSM 273 / BCRC 81028 / 2530) (Pelodictyon luteolum).